Consider the following 384-residue polypeptide: GTPase Obg (384 aa).

The Obg domain occupies 1-159 (MKFIDEAKIE…RSLQLELKVL (159 aa)). Positions 20 to 46 (ATSFRREKFVPRGGPDGGDGGKGGSVW) are disordered. The span at 33–43 (GPDGGDGGKGG) shows a compositional bias: gly residues. Positions 160–348 (ADVGLLGMPN…LVHQINQYLT (189 aa)) constitute an OBG-type G domain. Residues 166 to 173 (GMPNAGKS), 191 to 195 (FTTLH), 213 to 216 (DIPG), 284 to 287 (NKLD), and 329 to 331 (SAL) each bind GTP. Residues Ser-173 and Thr-193 each coordinate Mg(2+).

The protein belongs to the TRAFAC class OBG-HflX-like GTPase superfamily. OBG GTPase family. In terms of assembly, monomer. Mg(2+) is required as a cofactor.

It is found in the cytoplasm. In terms of biological role, an essential GTPase which binds GTP, GDP and possibly (p)ppGpp with moderate affinity, with high nucleotide exchange rates and a fairly low GTP hydrolysis rate. Plays a role in control of the cell cycle, stress response, ribosome biogenesis and in those bacteria that undergo differentiation, in morphogenesis control. The chain is GTPase Obg from Neisseria meningitidis serogroup B (strain ATCC BAA-335 / MC58).